Consider the following 549-residue polypeptide: TBC1 domain family member 3 (549 aa).

The Rab-GAP TBC domain maps to glycine 101–glycine 293. S-palmitoyl cysteine attachment occurs at residues cysteine 318 and cysteine 325. The disordered stretch occupies residues leucine 350–glycine 419. A compositionally biased stretch (low complexity) spans proline 398–proline 417.

Post-translationally, ubiquitinated by a CUL7-based E3 ligase, which leads to proteasomal degradation. In terms of processing, palmitoylation is required for membrane localization and protects TBC1D3 from ubiquitination. In terms of tissue distribution, expressed in liver, skeletal muscle, kidney, pancreas, spleen, testis, ovary, small intestine and peripheral blood leukocytes. Overexpressed in prostate cancers.

It localises to the cell membrane. In terms of biological role, acts as a GTPase activating protein for RAB5. Does not act on RAB4 or RAB11. The polypeptide is TBC1 domain family member 3 (TBC1D3) (Homo sapiens (Human)).